Reading from the N-terminus, the 347-residue chain is NADH-ubiquinone oxidoreductase chain 2 (347 aa).

The next 11 membrane-spanning stretches (helical) occupy residues 3–23 (PVVLTMILLTIMLGTVIVMTT), 25–45 (HWLLVWIGFEMNMLAIIPILM), 59–79 (YFLTQATASMLLMLAIVINLI), 96–116 (IIMTLALAMKLGLAPFHFWVP), 122–142 (IQLSSGLILLTWQKLAPMSIL), 149–169 (INLHLLLLMSLTSILIGGWGG), 178–198 (IMAYSSIAHMGWMTTIMIYNP), 200–220 (MALLNLTIYIILTTTTFMTFM), 237–257 (MPLLTSAVLMTMLSLGGLPPL), 274–294 (NSIIMPTIMAITALLNLFFYM), and 325–345 (LLSPMIILSTLILPLSPMLAL).

It belongs to the complex I subunit 2 family. In terms of assembly, core subunit of respiratory chain NADH dehydrogenase (Complex I) which is composed of 45 different subunits. Interacts with TMEM242.

The protein resides in the mitochondrion inner membrane. The enzyme catalyses a ubiquinone + NADH + 5 H(+)(in) = a ubiquinol + NAD(+) + 4 H(+)(out). Core subunit of the mitochondrial membrane respiratory chain NADH dehydrogenase (Complex I) which catalyzes electron transfer from NADH through the respiratory chain, using ubiquinone as an electron acceptor. Essential for the catalytic activity and assembly of complex I. In Paranyctimene raptor (Unstriped tube-nosed fruit bat), this protein is NADH-ubiquinone oxidoreductase chain 2.